We begin with the raw amino-acid sequence, 379 residues long: Alcohol dehydrogenase class-2 isozyme 1 (379 aa).

The Zn(2+) site is built by Cys47, His69, Cys99, Cys102, Cys105, Cys113, and Cys176. NAD(+)-binding positions include Gly205–Gly210, Asp229, Lys234, Val298–Val300, and Arg374.

The protein belongs to the zinc-containing alcohol dehydrogenase family. Class-II subfamily. As to quaternary structure, homodimer. It depends on Zn(2+) as a cofactor.

It localises to the cytoplasm. The enzyme catalyses a primary alcohol + NAD(+) = an aldehyde + NADH + H(+). It catalyses the reaction a secondary alcohol + NAD(+) = a ketone + NADH + H(+). The polypeptide is Alcohol dehydrogenase class-2 isozyme 1 (ADH2-1) (Oryctolagus cuniculus (Rabbit)).